A 275-amino-acid chain; its full sequence is MTLQQEIIQALGAKPHINPEEEIRRSVDFLKAYLETYPFLKSLVLGISGGQDSTLAGKLSQMAIAELREETGDNALQFIAVRLPYGVQADEQDCQDAIAFIQPDRVLTVNIKGAVLASEQALREAGIELSDFVRGNEKARERMKAQYSIAGMTHGVVVGTDHAAEAITGFFTKYGDGGTDINPLHRLNKRQGKQLLAALGCPEHLYKKVPTADLEDDRPSLPDEAALGVTYDNIDDYLEGKTLDPAIAKTIEGWYVKTEHKRRLPITVFDDFWKR.

Residue 46–53 (GISGGQDS) participates in ATP binding. Asp52 serves as a coordination point for Mg(2+). Residue Arg140 participates in deamido-NAD(+) binding. Residue Thr160 coordinates ATP. Glu165 lines the Mg(2+) pocket. Positions 173 and 180 each coordinate deamido-NAD(+). Positions 189 and 211 each coordinate ATP. 260 to 261 (HK) is a binding site for deamido-NAD(+).

Belongs to the NAD synthetase family. Homodimer.

It carries out the reaction deamido-NAD(+) + NH4(+) + ATP = AMP + diphosphate + NAD(+) + H(+). It participates in cofactor biosynthesis; NAD(+) biosynthesis; NAD(+) from deamido-NAD(+) (ammonia route): step 1/1. Its function is as follows. Catalyzes the ATP-dependent amidation of deamido-NAD to form NAD. Uses ammonia as a nitrogen source. The chain is NH(3)-dependent NAD(+) synthetase from Salmonella enteritidis PT4 (strain P125109).